Reading from the N-terminus, the 298-residue chain is Ribosomal RNA small subunit methyltransferase H (298 aa).

Residues 35–37 (GGH), Asp-55, Phe-82, Asp-100, and Gln-107 each bind S-adenosyl-L-methionine.

Belongs to the methyltransferase superfamily. RsmH family.

The protein resides in the cytoplasm. The catalysed reaction is cytidine(1402) in 16S rRNA + S-adenosyl-L-methionine = N(4)-methylcytidine(1402) in 16S rRNA + S-adenosyl-L-homocysteine + H(+). In terms of biological role, specifically methylates the N4 position of cytidine in position 1402 (C1402) of 16S rRNA. The sequence is that of Ribosomal RNA small subunit methyltransferase H from Chlamydia felis (strain Fe/C-56) (Chlamydophila felis).